The following is a 119-amino-acid chain: MARVKGGVVSRKRRKRILKLAKGYYGAKHILFRTAKEQVMNSYYYAYRDRRQKKRDFRKLWITRINAAARMNGLSYSQLMHGLKLAEIEVNRKMLADLAVNDAVAFTALADAAKAKLGK.

The protein belongs to the bacterial ribosomal protein bL20 family.

In terms of biological role, binds directly to 23S ribosomal RNA and is necessary for the in vitro assembly process of the 50S ribosomal subunit. It is not involved in the protein synthesizing functions of that subunit. In Streptococcus pneumoniae serotype 2 (strain D39 / NCTC 7466), this protein is Large ribosomal subunit protein bL20.